Here is a 239-residue protein sequence, read N- to C-terminus: Ribosomal RNA small subunit methyltransferase G (239 aa).

Residues Gly77, Phe82, 128-129 (AE), and Arg147 contribute to the S-adenosyl-L-methionine site.

The protein belongs to the methyltransferase superfamily. RNA methyltransferase RsmG family.

The protein resides in the cytoplasm. Specifically methylates the N7 position of guanine in position 535 of 16S rRNA. The protein is Ribosomal RNA small subunit methyltransferase G of Bacillus cereus (strain G9842).